The following is a 237-amino-acid chain: uncharacterized protein (237 aa).

The a divalent metal cation site is built by Glu-91, Glu-93, and Asp-122.

It belongs to the FAH family.

This is an uncharacterized protein from Methanocaldococcus jannaschii (strain ATCC 43067 / DSM 2661 / JAL-1 / JCM 10045 / NBRC 100440) (Methanococcus jannaschii).